We begin with the raw amino-acid sequence, 493 residues long: Cysteine--tRNA ligase (493 aa).

Cys29 lines the Zn(2+) pocket. The 'HIGH' region motif lies at 31 to 41 (VTVYDYCHIGH). Zn(2+) contacts are provided by Cys209, His234, and Glu238. Residues 266-270 (KMSKS) carry the 'KMSKS' region motif. An ATP-binding site is contributed by Lys269.

It belongs to the class-I aminoacyl-tRNA synthetase family. In terms of assembly, monomer. The cofactor is Zn(2+).

The protein resides in the cytoplasm. It catalyses the reaction tRNA(Cys) + L-cysteine + ATP = L-cysteinyl-tRNA(Cys) + AMP + diphosphate. This chain is Cysteine--tRNA ligase, found in Pelobacter propionicus (strain DSM 2379 / NBRC 103807 / OttBd1).